Reading from the N-terminus, the 309-residue chain is tRNA pseudouridine synthase B (309 aa).

Asp39 acts as the Nucleophile in catalysis.

Belongs to the pseudouridine synthase TruB family. Type 1 subfamily.

The catalysed reaction is uridine(55) in tRNA = pseudouridine(55) in tRNA. Functionally, responsible for synthesis of pseudouridine from uracil-55 in the psi GC loop of transfer RNAs. The chain is tRNA pseudouridine synthase B from Bacillus velezensis (strain DSM 23117 / BGSC 10A6 / LMG 26770 / FZB42) (Bacillus amyloliquefaciens subsp. plantarum).